Consider the following 145-residue polypeptide: RNA polymerase-binding transcription factor DksA (145 aa).

Zn(2+) is bound by residues Cys-108, Cys-111, Cys-129, and Cys-132. The dksA C4-type zinc-finger motif lies at 108-132 (CDCCGEEIGIRRLEARPTADLCIDC).

It belongs to the DksA family. As to quaternary structure, interacts directly with the RNA polymerase.

The protein localises to the cytoplasm. Transcription factor that acts by binding directly to the RNA polymerase (RNAP). Required for negative regulation of rRNA expression and positive regulation of several amino acid biosynthesis promoters. Also required for regulation of fis expression. The chain is RNA polymerase-binding transcription factor DksA from Haemophilus influenzae (strain ATCC 51907 / DSM 11121 / KW20 / Rd).